Here is a 216-residue protein sequence, read N- to C-terminus: Eukaryotic translation initiation factor 3 subunit K (216 aa).

The PCI domain occupies 40–202 (YDLDANLAVL…HIKSKNIAEK (163 aa)).

It belongs to the eIF-3 subunit K family. In terms of assembly, component of the eukaryotic translation initiation factor 3 (eIF-3) complex.

The protein resides in the cytoplasm. Its function is as follows. Component of the eukaryotic translation initiation factor 3 (eIF-3) complex, which is involved in protein synthesis of a specialized repertoire of mRNAs and, together with other initiation factors, stimulates binding of mRNA and methionyl-tRNAi to the 40S ribosome. The eIF-3 complex specifically targets and initiates translation of a subset of mRNAs involved in cell proliferation. In Nematostella vectensis (Starlet sea anemone), this protein is Eukaryotic translation initiation factor 3 subunit K.